The sequence spans 152 residues: MGLSNKFKSFFFLDEEEEYYEEEVAREPEPMQKKTKKEKPNKNRFYAVEEDDAKVVSMQGAQFSSRMVLAEPRVYAEAQELADYLKEYKSVVVNLQRISHDQATRIVDFLSGTVYALGGDIQRVGNNIFLCTPDNVEVDGSISEMLDEQNFM.

It belongs to the SepF family. As to quaternary structure, homodimer. Interacts with FtsZ.

The protein resides in the cytoplasm. Functionally, cell division protein that is part of the divisome complex and is recruited early to the Z-ring. Probably stimulates Z-ring formation, perhaps through the cross-linking of FtsZ protofilaments. Its function overlaps with FtsA. This is Cell division protein SepF from Listeria monocytogenes serotype 4b (strain CLIP80459).